The primary structure comprises 145 residues: Large ribosomal subunit protein uL13 (145 aa).

The disordered stretch occupies residues 72–91 (DKMYHRHSNHPGGLKSISAG).

Belongs to the universal ribosomal protein uL13 family. Part of the 50S ribosomal subunit.

Functionally, this protein is one of the early assembly proteins of the 50S ribosomal subunit, although it is not seen to bind rRNA by itself. It is important during the early stages of 50S assembly. In Staphylococcus epidermidis (strain ATCC 12228 / FDA PCI 1200), this protein is Large ribosomal subunit protein uL13.